A 527-amino-acid polypeptide reads, in one-letter code: Glutamate--cysteine ligase (527 aa).

It belongs to the glutamate--cysteine ligase type 1 family. Type 1 subfamily.

The enzyme catalyses L-cysteine + L-glutamate + ATP = gamma-L-glutamyl-L-cysteine + ADP + phosphate + H(+). Its pathway is sulfur metabolism; glutathione biosynthesis; glutathione from L-cysteine and L-glutamate: step 1/2. This Pseudomonas paraeruginosa (strain DSM 24068 / PA7) (Pseudomonas aeruginosa (strain PA7)) protein is Glutamate--cysteine ligase.